The sequence spans 517 residues: GMP synthase [glutamine-hydrolyzing] (517 aa).

In terms of domain architecture, Glutamine amidotransferase type-1 spans 11-202 (KIIVLDYGSQ…AFDICKAEAN (192 aa)). The active-site Nucleophile is the Cys88. Active-site residues include His176 and Glu178. Residues 203–392 (WSMDDFITKQ…LGMPHALVWR (190 aa)) enclose the GMPS ATP-PPase domain. 230–236 (SGGVDSS) is an ATP binding site.

As to quaternary structure, homodimer.

It carries out the reaction XMP + L-glutamine + ATP + H2O = GMP + L-glutamate + AMP + diphosphate + 2 H(+). Its pathway is purine metabolism; GMP biosynthesis; GMP from XMP (L-Gln route): step 1/1. In terms of biological role, catalyzes the synthesis of GMP from XMP. This chain is GMP synthase [glutamine-hydrolyzing], found in Lacticaseibacillus casei (strain BL23) (Lactobacillus casei).